Reading from the N-terminus, the 1764-residue chain is Latent-transforming growth factor beta-binding protein 2 (1764 aa).

Positions 1 to 35 (MRAPTTVRCSGRIQRARWRGFLPLVLALLMGTSHA) are cleaved as a signal peptide. Residues 80 to 140 (PGLSPSEWNQ…PPAARTAHSV (61 aa)) are disordered. The segment at 94 to 115 (IPGRLAEAEARRPSRAQQLRRV) is heparin-binding. Polar residues predominate over residues 108 to 128 (RAQQLRRVQSPVQTRRSNPRG). A glycan (N-linked (GlcNAc...) asparagine) is linked at Asn175. Positions 181 to 213 (IKPVCQPPCQNRGSCSRPQLCICRSGFRGARCE) constitute an EGF-like 1 domain. 3 disulfide bridges follow: Cys185–Cys195, Cys189–Cys201, and Cys203–Cys212. Residues 220 to 279 (EFDPQNARPVPRRSVEGAPGPHRSSEARGSLVTRIQPLLPPLPPPPSRTLSQTRPLQQHA) are disordered. The segment at 226–243 (ARPVPRRSVEGAPGPHRS) is heparin-binding. Over residues 257–266 (LLPPLPPPPS) the composition is skewed to pro residues. An N-linked (GlcNAc...) asparagine glycan is attached at Asn330. 331-341 (LTEKIKKIKVV) contributes to the heparin binding site. In terms of domain architecture, EGF-like 2 spans 383 to 415 (RIYFCQIPCLNGGRCIGRDECWCPANSTGKFCH). 3 cysteine pairs are disulfide-bonded: Cys387/Cys397, Cys391/Cys403, and Cys405/Cys414. N-linked (GlcNAc...) asparagine glycosylation occurs at Asn408. The disordered stretch occupies residues 484-529 (EVDPVPEDNSVETRASHRPHGSSGHSHWASNSIPARAGEAPRPPPV). Ser493 is modified (phosphoserine). Positions 538-590 (GQCYLSTVNGQCANPLGELTSQEDCCGSVGTSWGVTSCAPCPPRPAFPVIENG) constitute a TB 1 domain. Cystine bridges form between Cys540–Cys562, Cys549–Cys575, and Cys563–Cys578. An N-linked (GlcNAc...) asparagine glycan is attached at Asn602. In terms of domain architecture, EGF-like 3; calcium-binding spans 608-648 (DINECLTLGLCKDSECVNTRGSYLCTCRPGLMLDPSRSRCV). Disulfide bonds link Cys612/Cys623, Cys618/Cys632, Cys634/Cys647, Cys660/Cys682, Cys669/Cys695, Cys683/Cys698, and Cys684/Cys710. The 53-residue stretch at 658–710 (GLCYRSMVSGTCTLPLVQRITKQICCCSRVGKAWGSKCEHCPLPGTEAFREIC) folds into the TB 2 domain. Disordered regions lie at residues 729–759 (KAEEEELASPVREQRQQSSGPPPGAAERQPL) and 786–809 (SAPHLPARVPGDATGRPTPSLPGQ). The EGF-like 4 domain maps to 834–876 (GFDPCFAGASNICGPGTCVKLPNGYRCVCSPGYQLHPSQDYCT). Cystine bridges form between Cys838–Cys851, Cys846–Cys860, Cys862–Cys875, Cys881–Cys892, Cys886–Cys901, Cys903–Cys918, Cys924–Cys935, Cys930–Cys944, Cys946–Cys958, Cys964–Cys975, Cys970–Cys984, Cys987–Cys998, Cys1004–Cys1015, Cys1010–Cys1024, Cys1026–Cys1039, Cys1045–Cys1056, Cys1051–Cys1065, Cys1068–Cys1081, Cys1087–Cys1098, Cys1093–Cys1107, Cys1110–Cys1123, Cys1129–Cys1141, Cys1136–Cys1150, Cys1152–Cys1164, Cys1170–Cys1182, Cys1176–Cys1191, Cys1193–Cys1206, Cys1212–Cys1223, Cys1218–Cys1232, Cys1234–Cys1247, Cys1253–Cys1265, Cys1259–Cys1274, Cys1276–Cys1289, Cys1295–Cys1307, Cys1302–Cys1316, Cys1318–Cys1332, Cys1359–Cys1382, Cys1369–Cys1394, Cys1383–Cys1397, Cys1435–Cys1448, Cys1443–Cys1457, Cys1459–Cys1472, Cys1478–Cys1488, Cys1483–Cys1497, and Cys1499–Cys1512. Residues 877 to 919 (DDNECLRNPCEGRGRCVNSVGSYSCLCYPGYTLATLGDTQECQ) enclose the EGF-like 5; calcium-binding domain. The 40-residue stretch at 920 to 959 (DVDECEQPGVCSGGRCSNTEGSYHCECDQGYVMVRRGHCQ) folds into the EGF-like 6; calcium-binding domain. The EGF-like 7; calcium-binding domain occupies 960–999 (DINECRHPGTCPDGRCVNSPGSYTCLACEEGYIGQSGNCV). An EGF-like 8; calcium-binding domain is found at 1000-1040 (DMNECLTPGICAHGRCINMEGSFRCSCEPGYELTPDKKGCR). Residues 1041–1082 (DVDECASRASCPTGLCLNTEGSFTCSACQSGYWVNEDGTACE) form the EGF-like 9; calcium-binding domain. Residues 1083 to 1124 (DLDECAFPGVCPTGVCTNTVGSFSCKDCDRGFRPSPLGNSCE) enclose the EGF-like 10; calcium-binding domain. The region spanning 1125–1165 (DVDECEGPQNSCLGGECKNTDGSYQCLCPQGFQLANGTVCE) is the EGF-like 11; calcium-binding domain. N-linked (GlcNAc...) asparagine glycosylation is present at Asn1160. The 42-residue stretch at 1166–1207 (DVDECVGEEHCAPHGECLNSPGSFFCLCAPGFASAEGGTRCQ) folds into the EGF-like 12; calcium-binding domain. The EGF-like 13; calcium-binding domain occupies 1208–1248 (DVDECATTEPCLGGHCVNTEGSFNCLCETGFQPAPDSGECV). The region spanning 1249–1290 (DIDECANDTVCGNHGFCDNTDGSFRCLCDQGFETSPSGWECV) is the EGF-like 15; calcium-binding domain. An N-linked (GlcNAc...) asparagine glycan is attached at Asn1255. In terms of domain architecture, EGF-like 16; calcium-binding spans 1291–1333 (DVNECELMLAVCGDALCENVEGSFLCLCASDLEEYDAEEGHCR). One can recognise a TB 3 domain in the interval 1357-1409 (MECYAEHNGGPPCSQILGQNSTQAECCSTQGARWGETCDPCPSEDSVEFSELC). Residue Asn1376 is glycosylated (N-linked (GlcNAc...) asparagine). One can recognise an EGF-like 17; calcium-binding domain in the interval 1431 to 1473 (DADECILFGPALCQNGRCLNTVPGYICLCNPGYHYDAVSRKCQ). The region spanning 1474–1513 (DHNECQDLACENGECVNTEGSFHCFCSPPLILDLSGQRCV) is the EGF-like 18; calcium-binding domain. N-linked (GlcNAc...) asparagine glycosylation is present at Asn1514. Residues 1530–1582 (DICWKKVTNDVCSQPLRGHHTTYTECCCQDGEAWSQQCALCPPRSSEVYAQLC) enclose the TB 4 domain. Disulfide bonds link Cys1532–Cys1555, Cys1541–Cys1567, Cys1556–Cys1570, Cys1557–Cys1582, Cys1680–Cys1691, Cys1686–Cys1700, Cys1702–Cys1715, Cys1721–Cys1736, Cys1731–Cys1745, and Cys1747–Cys1760. Residues 1585 to 1764 (ARIEAEREAG…PGPPHCAAKE (180 aa)) form a C-terminal domain region. The EGF-like 19; calcium-binding domain maps to 1676 to 1716 (QAEECGILNGCENGRCVRVREGYTCDCFEGFQLDTALMACV). Residues 1717–1761 (DVNECEDLNGAARLCAHGHCENTEGSYRCHCSPGYVAEPGPPHCA) enclose the EGF-like 20; calcium-binding domain.

This sequence belongs to the LTBP family. As to quaternary structure, forms part of the large latent transforming growth factor beta precursor complex; removal is essential for activation of complex. Interacts with SDC4. Interacts (via C-terminal domain) with FBN1 (via N-terminal domain) in a Ca(+2)-dependent manner. N-Glycosylated. In terms of processing, contains hydroxylated asparagine residues. As to expression, expressed in cortical astrocytes and glioma cells. Expression is up-regulated by TGFB1.

It is found in the secreted. It localises to the extracellular space. The protein localises to the extracellular matrix. Functionally, may play an integral structural role in elastic-fiber architectural organization and/or assembly. The protein is Latent-transforming growth factor beta-binding protein 2 (Ltbp2) of Rattus norvegicus (Rat).